A 256-amino-acid chain; its full sequence is Biosynthetic peptidoglycan transglycosylase (256 aa).

A helical membrane pass occupies residues 26-48; sequence VARWLAYAGGVFAGAWLATQLYY.

It belongs to the glycosyltransferase 51 family.

Its subcellular location is the cell inner membrane. It catalyses the reaction [GlcNAc-(1-&gt;4)-Mur2Ac(oyl-L-Ala-gamma-D-Glu-L-Lys-D-Ala-D-Ala)](n)-di-trans,octa-cis-undecaprenyl diphosphate + beta-D-GlcNAc-(1-&gt;4)-Mur2Ac(oyl-L-Ala-gamma-D-Glu-L-Lys-D-Ala-D-Ala)-di-trans,octa-cis-undecaprenyl diphosphate = [GlcNAc-(1-&gt;4)-Mur2Ac(oyl-L-Ala-gamma-D-Glu-L-Lys-D-Ala-D-Ala)](n+1)-di-trans,octa-cis-undecaprenyl diphosphate + di-trans,octa-cis-undecaprenyl diphosphate + H(+). Its pathway is cell wall biogenesis; peptidoglycan biosynthesis. Peptidoglycan polymerase that catalyzes glycan chain elongation from lipid-linked precursors. The chain is Biosynthetic peptidoglycan transglycosylase from Burkholderia thailandensis (strain ATCC 700388 / DSM 13276 / CCUG 48851 / CIP 106301 / E264).